Reading from the N-terminus, the 397-residue chain is MVSLSTIKSLIEKKGANLPENVKSELYEKLKKYNEKYKLTKAEIEAIIDDVVKEYERALVEPGEPVGTVAAQSIGEPSTQMTLNTFHYAGVAEINVTLGLPRIIEIVDARKNPSTPMMTVYLDEEHRYDRAKAEEVARRIEGTTLENLARSTTLDLINFEFIVEIDPERLERSGLTMEKVVKKLESSFKSAEFEVDGYTLIVRPKKADKISDLRRFAEKIKKHRLKGLSGVGKTIVRKEGDEYVIYTEGSNFKQVLKVPGVDPTRTRTNNIHEIAEVLGIEAARNAIIDEIVSTMQEQGLEVDIRHIMLVADMMTLDGIVRPIGRHGVVGEKSSVLARAAFEITVQHLFEAAEKGEVDNLNGVIENVLIGQPVPVGTGMVKLTMKLPLRPQKEKEEV.

This sequence belongs to the RNA polymerase beta' chain family. As to quaternary structure, part of the RNA polymerase complex. An artificial construct of the RNAP clamp domain (including part of this protein) contacts transcription elongation factors Spt4 and Spt5.

It is found in the cytoplasm. It catalyses the reaction RNA(n) + a ribonucleoside 5'-triphosphate = RNA(n+1) + diphosphate. DNA-dependent RNA polymerase (RNAP) catalyzes the transcription of DNA into RNA using the four ribonucleoside triphosphates as substrates. Forms part of the jaw domain. This chain is DNA-directed RNA polymerase subunit Rpo1C, found in Pyrococcus furiosus (strain ATCC 43587 / DSM 3638 / JCM 8422 / Vc1).